The sequence spans 214 residues: Molybdenum cofactor guanylyltransferase (214 aa).

GTP contacts are provided by residues 18-20 (LAG), K31, D77, and D112. D112 serves as a coordination point for Mg(2+).

The protein belongs to the MobA family. As to quaternary structure, monomer. It depends on Mg(2+) as a cofactor.

It is found in the cytoplasm. It catalyses the reaction Mo-molybdopterin + GTP + H(+) = Mo-molybdopterin guanine dinucleotide + diphosphate. Its function is as follows. Transfers a GMP moiety from GTP to Mo-molybdopterin (Mo-MPT) cofactor (Moco or molybdenum cofactor) to form Mo-molybdopterin guanine dinucleotide (Mo-MGD) cofactor. In Rhodopseudomonas palustris (strain HaA2), this protein is Molybdenum cofactor guanylyltransferase.